Reading from the N-terminus, the 81-residue chain is Protein Vpu (81 aa).

The Extracellular segment spans residues 1–6 (MQPIQI). A helical membrane pass occupies residues 7 to 27 (AIAALVVAIIIAIVVWSIVII). Topologically, residues 28 to 81 (EYRKILRQRKIDRLIDRLIERAEDSGNESEGEISALVEMGVEMGHHAPWDIDDL) are cytoplasmic. Phosphoserine; by host CK2 occurs at positions 52 and 56.

Belongs to the HIV-1 VPU protein family. In terms of assembly, homopentamer. Interacts with host CD4 and BRTC; these interactions induce proteasomal degradation of CD4. Interacts with host BST2; this interaction leads to the degradation of host BST2. Interacts with host FBXW11. Interacts with host AP1M1; this interaction plays a role in the mistrafficking and subsequent degradation of host BST2. Interacts with host RANBP2; this interaction allows Vpu to down-regulate host BLM sumoylation. Phosphorylated by host CK2. This phosphorylation is necessary for interaction with human BTRC and degradation of CD4.

It is found in the host membrane. With respect to regulation, ion channel activity is inhibited by hexamethylene amiloride in vitro. Its function is as follows. Enhances virion budding by targeting host CD4 and Tetherin/BST2 to proteasome degradation. Degradation of CD4 prevents any unwanted premature interactions between viral Env and its host receptor CD4 in the endoplasmic reticulum. Degradation of antiretroviral protein Tetherin/BST2 is important for virion budding, as BST2 tethers new viral particles to the host cell membrane. Mechanistically, Vpu bridges either CD4 or BST2 to BTRC, a substrate recognition subunit of the Skp1/Cullin/F-box protein E3 ubiquitin ligase, induces their ubiquitination and subsequent proteasomal degradation. The alteration of the E3 ligase specificity by Vpu seems to promote the degradation of host IKBKB, leading to NF-kappa-B down-regulation and subsequent apoptosis. Acts as a viroporin that forms an oligomeric ion channel in membranes. Modulates the host DNA repair mechanisms to promote degradation of nuclear viral cDNA in cells that are already productively infected in order to suppress immune sensing and proviral hyper-integration (superinfection). Manipulates PML-NBs and modulates SUMOylation of host BLM protein thereby enhancing its DNA-end processing activity toward viral unintegrated linear DNA. Also inhibits RAD52-mediated homologous repair of viral cDNA, preventing the generation of dead-end circular forms of single copies of the long terminal repeat and permitting sustained nucleolytic attack. This chain is Protein Vpu, found in Homo sapiens (Human).